Consider the following 161-residue polypeptide: N5-carboxyaminoimidazole ribonucleotide mutase (161 aa).

Positions 9, 12, and 39 each coordinate substrate.

It belongs to the AIR carboxylase family. Class I subfamily.

The catalysed reaction is 5-carboxyamino-1-(5-phospho-D-ribosyl)imidazole + H(+) = 5-amino-1-(5-phospho-D-ribosyl)imidazole-4-carboxylate. The protein operates within purine metabolism; IMP biosynthesis via de novo pathway; 5-amino-1-(5-phospho-D-ribosyl)imidazole-4-carboxylate from 5-amino-1-(5-phospho-D-ribosyl)imidazole (N5-CAIR route): step 2/2. Its function is as follows. Catalyzes the conversion of N5-carboxyaminoimidazole ribonucleotide (N5-CAIR) to 4-carboxy-5-aminoimidazole ribonucleotide (CAIR). The chain is N5-carboxyaminoimidazole ribonucleotide mutase from Vibrio cholerae serotype O1 (strain ATCC 39315 / El Tor Inaba N16961).